A 380-amino-acid polypeptide reads, in one-letter code: tRNA-specific 2-thiouridylase MnmA (380 aa).

ATP-binding positions include 9–16 (GVSGGVDS) and Met-35. An interaction with target base in tRNA region spans residues 94–96 (NPD). Residue Cys-99 is the Nucleophile of the active site. Cys-99 and Cys-195 form a disulfide bridge. ATP is bound at residue Gly-123. Residues 145-147 (KDQ) form an interaction with tRNA region. The Cysteine persulfide intermediate role is filled by Cys-195. Residues 308 to 309 (RY) are interaction with tRNA.

The protein belongs to the MnmA/TRMU family.

Its subcellular location is the cytoplasm. It carries out the reaction S-sulfanyl-L-cysteinyl-[protein] + uridine(34) in tRNA + AH2 + ATP = 2-thiouridine(34) in tRNA + L-cysteinyl-[protein] + A + AMP + diphosphate + H(+). Catalyzes the 2-thiolation of uridine at the wobble position (U34) of tRNA, leading to the formation of s(2)U34. The sequence is that of tRNA-specific 2-thiouridylase MnmA from Stenotrophomonas maltophilia (strain K279a).